We begin with the raw amino-acid sequence, 426 residues long: Enolase (426 aa).

Gln-163 lines the (2R)-2-phosphoglycerate pocket. Residue Glu-205 is the Proton donor of the active site. Positions 242, 286, and 313 each coordinate Mg(2+). (2R)-2-phosphoglycerate is bound by residues Lys-338, Arg-367, Ser-368, and Lys-389. Lys-338 serves as the catalytic Proton acceptor.

The protein belongs to the enolase family. Mg(2+) is required as a cofactor.

It localises to the cytoplasm. The protein localises to the secreted. Its subcellular location is the cell surface. It carries out the reaction (2R)-2-phosphoglycerate = phosphoenolpyruvate + H2O. It participates in carbohydrate degradation; glycolysis; pyruvate from D-glyceraldehyde 3-phosphate: step 4/5. Functionally, catalyzes the reversible conversion of 2-phosphoglycerate (2-PG) into phosphoenolpyruvate (PEP). It is essential for the degradation of carbohydrates via glycolysis. This Helicobacter pylori (strain HPAG1) protein is Enolase.